A 293-amino-acid polypeptide reads, in one-letter code: MTLEGHACAFGAGTIINAIATWKGAAFGIDLKTFADVELSESESVITGSIKEVPEGDTRLIERCVELVLGRFGLELGGTIRTWSEIPLAGGLKSSSAAANASVLATLHAVGETMPSLEIIKLGVRAAKEVGVTVTGAFDDACASFLGGIVITDNRNMKLIKREEADSRVLIFAPSKKAFSADTNVKRSRLIAPYVEMAYELALAGDYERAMTLNGFLYCGALGFDTEYMLRALECGVKGVSLSGTGPSYAALVKADQVKELKSAWESCGMEGRVIETSINNSGAISFNREGSS.

87–97 (PLAGGLKSSSA) is an ATP binding site.

This sequence belongs to the GHMP kinase family. Archaeal shikimate kinase subfamily.

It is found in the cytoplasm. It carries out the reaction shikimate + ATP = 3-phosphoshikimate + ADP + H(+). It functions in the pathway metabolic intermediate biosynthesis; chorismate biosynthesis; chorismate from D-erythrose 4-phosphate and phosphoenolpyruvate: step 5/7. This Methanosarcina mazei (strain ATCC BAA-159 / DSM 3647 / Goe1 / Go1 / JCM 11833 / OCM 88) (Methanosarcina frisia) protein is Shikimate kinase.